The primary structure comprises 130 residues: MKRTALLHADLSRAIAALGHGDMIVIGDAGLPIPPGPLRIDLAVTPGLPAVADVLAAVLSEMQVERALVATEAVERAGGALPGWAGALPVAPQTLSHEEFKRLTRDARAVVRTGECTPYANVILCAGVTF.

Histidine 20 (proton donor) is an active-site residue. Substrate is bound by residues aspartate 28, histidine 97, and 119–121 (YAN).

The protein belongs to the RbsD / FucU family. RbsD subfamily. In terms of assembly, homodecamer.

It is found in the cytoplasm. The catalysed reaction is beta-D-ribopyranose = beta-D-ribofuranose. It functions in the pathway carbohydrate metabolism; D-ribose degradation; D-ribose 5-phosphate from beta-D-ribopyranose: step 1/2. Its function is as follows. Catalyzes the interconversion of beta-pyran and beta-furan forms of D-ribose. This chain is D-ribose pyranase, found in Paracidovorax citrulli (strain AAC00-1) (Acidovorax citrulli).